Reading from the N-terminus, the 307-residue chain is Polysialic acid O-acetyltransferase (307 aa).

Residues 1 to 90 show a composition bias toward basic and acidic residues; sequence MLRLKTQDSR…LKTQDSRLKT (90 aa). A disordered region spans residues 1-95; the sequence is MLRLKTQDSR…SRLKTQDSFS (95 aa). A run of 13 repeats spans residues 3–9, 10–16, 17–23, 24–30, 31–37, 38–44, 45–51, 52–58, 59–65, 66–72, 73–79, 80–86, and 87–93. The 13 X 7 AA tandem repeat of RLKTQDS encoded by a 7 nucleotide repeat stretch occupies residues 3–93; it reads RLKTQDSRLK…QDSRLKTQDS (91 aa). Acetyl-CoA is bound by residues 208-210, arginine 237, lysine 243, lysine 261, and lysine 278; that span reads DGH.

Belongs to the transferase hexapeptide repeat family. Homotrimer. Hexamer formed by two homotrimers.

The enzyme catalyses [N-acetyl-alpha-D-neuraminosyl-(2-&gt;8)](n) + n acetyl-CoA = [N,O(9)-diacetyl-alpha-D-neuraminosyl-(2-&gt;8)](n) + n CoA. It carries out the reaction [N-acetyl-alpha-D-neuraminosyl-(2-&gt;8)](n) + n acetyl-CoA = [O(7),N-diacetyl-alpha-D-neuraminosyl-(2-&gt;8)](n) + n CoA. Catalyzes the O-acetylation of capsular polymeric sialic acid. Shows high substrate specificity toward polymers of sialic acid that contains a large number of residues. This is Polysialic acid O-acetyltransferase from Escherichia coli O1:K1 / APEC.